Here is a 108-residue protein sequence, read N- to C-terminus: Peptidyl-prolyl cis-trans isomerase Fkbp12 (108 aa).

The disordered stretch occupies residues 1–21; it reads MGVQVVPIAPGDGSTYPKNGQ. The 89-residue stretch at 20–108 folds into the PPIase FKBP-type domain; it reads GQKVTVHYTG…TFDVELLKVE (89 aa).

The protein belongs to the FKBP-type PPIase family. FKBP1 subfamily.

Its subcellular location is the cytoplasm. It catalyses the reaction [protein]-peptidylproline (omega=180) = [protein]-peptidylproline (omega=0). Functionally, PPIases accelerate the folding of proteins. It catalyzes the cis-trans isomerization of proline imidic peptide bonds in oligopeptides. Binds to ligand-free TGF beta type I receptor, from which it is released upon a ligand-induced, type II receptor mediated phosphorylation of the type I receptor. Binding is inhibitory to the signaling pathways of the TGF beta family ligands. This Drosophila melanogaster (Fruit fly) protein is Peptidyl-prolyl cis-trans isomerase Fkbp12.